The primary structure comprises 626 residues: PEX5-related protein (626 aa).

Disordered regions lie at residues 1-20 (MYQG…LSSD), 118-167 (VSQT…SSLD), and 181-235 (KFHG…ASEL). Residues 181–198 (KFHGDRNTKGHPMAERKS) are compositionally biased toward basic and acidic residues. Phosphoserine is present on Ser-205. The span at 225–235 (SALNSESASEL) shows a compositional bias: low complexity. Phosphoserine occurs at positions 253, 257, and 261. TPR repeat units follow at residues 326–359 (WPGA…DPGD), 360–393 (AEAW…QPNN), and 395–427 (KALM…NPKY). A phosphoserine mark is found at Ser-445 and Ser-447. TPR repeat units lie at residues 474-507 (PDLQ…RPED), 509-541 (SLWN…QPGF), and 543-575 (RSRY…QRKS).

The protein belongs to the peroxisomal targeting signal receptor family. As to quaternary structure, interacts with RAB8B. Forms an obligate 4:4 complex with HCN2. May interact with the C-terminal PTS1-type tripeptide peroxisomal targeting signal (SKL-type); the relevance of such interaction is however unclear. Interacts with HCN3. Interacts with HCN4 with a 4:4 HCN4:PEX5L stoichiometry; reduces the effects of cAMP on the voltage-dependence and rate of activation of HCN4. As to expression, mainly expressed in brain. Also expressed in pancreas, testis and pituitary.

It localises to the cytoplasm. The protein localises to the membrane. Accessory subunit of hyperpolarization-activated cyclic nucleotide-gated (HCN) channels, regulating their cell-surface expression and cyclic nucleotide dependence. This is PEX5-related protein (PEX5L) from Homo sapiens (Human).